The following is a 443-amino-acid chain: MITIKKGLDLPIAGKPEQVIRDGNAVTEVAMLGEEYVGMRPSMKVREGDTVKKGQVLFEDKKNPGVVFTAPASGTVTAINRGAKRVLQSVVIRVGGNEQVTFEKYDVAALNQLTGEQVRRNLQASGLWTALRTRPFSKVPAIDAVPSSIFVNAMDSNPLAADPAVIINEYAEDFTNGLTVLTRLHDKVNLVKSAGSNITAVGAVKVHEFGGKHPAGLVGTHIHFIDPVSLTKTVWHLNYQDVIAIGKLFTTGELFVERVVSLAGPQVKNPRLVRTVSGANLTQLTENELNAGENRVISGSVLYGAKAEGPHNYLGRYALQVSVLAEDTEKEFFGWISPQANKFSITRTVLGHFGKKLFNFTTAENGGHRAMVPIGSYERVMPLDILPTLLLRDLEVGDTDSAQSLGCLELDEEDLALCTFVDPGKADYGSFLRQALDKIEKEG.

The protein belongs to the NqrA family. In terms of assembly, composed of six subunits; NqrA, NqrB, NqrC, NqrD, NqrE and NqrF.

It carries out the reaction a ubiquinone + n Na(+)(in) + NADH + H(+) = a ubiquinol + n Na(+)(out) + NAD(+). Its function is as follows. NQR complex catalyzes the reduction of ubiquinone-1 to ubiquinol by two successive reactions, coupled with the transport of Na(+) ions from the cytoplasm to the periplasm. NqrA to NqrE are probably involved in the second step, the conversion of ubisemiquinone to ubiquinol. The sequence is that of Na(+)-translocating NADH-quinone reductase subunit A from Actinobacillus succinogenes (strain ATCC 55618 / DSM 22257 / CCUG 43843 / 130Z).